Consider the following 242-residue polypeptide: Small ribosomal subunit protein uS2 (242 aa).

This sequence belongs to the universal ribosomal protein uS2 family.

This Aeromonas hydrophila subsp. hydrophila (strain ATCC 7966 / DSM 30187 / BCRC 13018 / CCUG 14551 / JCM 1027 / KCTC 2358 / NCIMB 9240 / NCTC 8049) protein is Small ribosomal subunit protein uS2.